Reading from the N-terminus, the 374-residue chain is Ferroptosis suppressor protein 1 (374 aa).

The N-myristoyl glycine moiety is linked to residue glycine 2. The chain crosses the membrane as a helical span at residues 13–35 (VVIVGGGFAGIAAASQLKSFGIP). 6-hydroxy-FAD contacts are provided by residues 17 to 21 (GGGFA), arginine 53, and valine 81. Lysine 167 is modified (N6-acetyllysine). Aspartate 285 lines the 6-hydroxy-FAD pocket.

The protein belongs to the FAD-dependent oxidoreductase family. 6-hydroxy-FAD serves as cofactor. In terms of processing, N-myristoylation at Gly-2 mediates the recruitment to lipid droplets and plasma membrane. Acetylation at Lys-167 prevents AIFM2 ubiquitination and degradation, thereby inhibiting ferroptosis. KAT2B mediates acetylation at Lys-167, while HDAC3 removes it. Post-translationally, ubiquitinated. AIFM2 undergoes 'Lys-29'-ubiquitination and proteasomal degradation, which is inhibited by acetylation at Lys-167.

It localises to the lipid droplet. The protein resides in the cell membrane. It is found in the cytoplasm. Its subcellular location is the mitochondrion membrane. The protein localises to the nucleus. It carries out the reaction ubiquinone-10 + NADH + H(+) = ubiquinol-10 + NAD(+). The catalysed reaction is phylloquinone + NADH + H(+) = phylloquinol + NAD(+). The enzyme catalyses menaquinone-4 + NADH + H(+) = menaquinol-4 + NAD(+). It catalyses the reaction menadione + NADH + H(+) = menadiol + NAD(+). Its activity is regulated as follows. The modification by 4-hydroxy-2-nonenal (HNE) adduction in mitochondria results in loss of the oxidoreductase activity and activation of a novel function in mitochondrial oxidative stress signaling. Functionally, a NAD(P)H-dependent oxidoreductase that acts as a key inhibitor of ferroptosis. At the plasma membrane, catalyzes reduction of coenzyme Q/ubiquinone-10 to ubiquinol-10, a lipophilic radical-trapping antioxidant that prevents lipid oxidative damage and consequently ferroptosis. Acts in parallel to GPX4 to suppress phospholipid peroxidation and ferroptosis. This anti-ferroptotic function is independent of cellular glutathione levels. Also acts as a potent radical-trapping antioxidant by mediating warfarin-resistant vitamin K reduction in the canonical vitamin K cycle: catalyzes NAD(P)H-dependent reduction of vitamin K (phylloquinone, menaquinone-4 and menadione) to hydroquinone forms. Hydroquinones act as potent radical-trapping antioxidants inhibitor of phospholipid peroxidation and ferroptosis. May play a role in mitochondrial stress signaling. Upon oxidative stress, associates with the lipid peroxidation end product 4-hydroxy-2-nonenal (HNE) forming a lipid adduct devoid of oxidoreductase activity, which then translocates from mitochondria into the nucleus triggering DNA damage and cell death. The chain is Ferroptosis suppressor protein 1 (aifm2) from Xenopus laevis (African clawed frog).